We begin with the raw amino-acid sequence, 402 residues long: Guanine nucleotide-binding protein subunit alpha-1 (402 aa).

Residues 1–12 (MGCSASKPSEPS) are compositionally biased toward polar residues. The disordered stretch occupies residues 1-70 (MGCSASKPSE…PEPQKPAEPA (70 aa)). The N-myristoyl glycine moiety is linked to residue G2. C3 carries the S-palmitoyl cysteine lipid modification. Residues 23-33 (KKVEQVPEPKP) show a composition bias toward basic and acidic residues. A compositionally biased stretch (pro residues) spans 34-69 (EPQPQPEPQPQPEPPKPAEPAPAPAPAPEPQKPAEP). In terms of domain architecture, G-alpha spans 82 to 402 (EAYGLLLCGA…FISDKYYQDA (321 aa)). The tract at residues 85-98 (GLLLCGAGESGKTT) is G1 motif. The GTP site is built by E93, S94, G95, K96, T97, T98, D198, L223, S229, G251, N317, K318, D320, and A377. T97 serves as a coordination point for Mg(2+). The interval 221 to 229 (DVLRARIRS) is G2 motif. S229 contributes to the Mg(2+) binding site. A G3 motif region spans residues 244 to 253 (IRIFDVGGQK). Residues 313–320 (FLVCNKFD) form a G4 motif region. The segment at 375–380 (IVALNG) is G5 motif.

Belongs to the G-alpha family. As to quaternary structure, g proteins are composed of 3 units; alpha, beta and gamma. The alpha chain contains the guanine nucleotide binding site. Requires Mg(2+) as cofactor.

It localises to the cytoplasm. It is found in the perinuclear region. The protein resides in the endomembrane system. Functionally, guanine nucleotide-binding proteins (G proteins) are involved as modulators or transducers in various transmembrane signaling systems. This Trichomonas vaginalis protein is Guanine nucleotide-binding protein subunit alpha-1 (GA1).